A 364-amino-acid polypeptide reads, in one-letter code: Leucine dehydrogenase (364 aa).

Lysine 80 is a catalytic residue. Residue 180 to 186 participates in NAD(+) binding; sequence GVGNVAY.

It belongs to the Glu/Leu/Phe/Val dehydrogenases family.

The catalysed reaction is L-leucine + NAD(+) + H2O = 4-methyl-2-oxopentanoate + NH4(+) + NADH + H(+). It participates in amino-acid degradation; L-leucine degradation; 4-methyl-2-oxopentanoate from L-leucine (dehydrogenase route): step 1/1. Functionally, catalyzes the reversible deamination of L-leucine to 4-methyl-2-oxopentanoate. The chain is Leucine dehydrogenase (yqiT) from Bacillus subtilis (strain 168).